The chain runs to 411 residues: Protein translocase subunit SecY (411 aa).

Helical transmembrane passes span 11 to 31 (IIFT…PVPG), 52 to 72 (IFSG…VPYI), 111 to 131 (ALGW…PYVF), 135 to 155 (FAFV…IMWL), 163 to 180 (GIGN…VSGL), 197 to 217 (SLKF…TICV), 253 to 273 (VMPI…TQII), 291 to 311 (LYLL…TSIV), 349 to 369 (TFLG…IEKV), and 377 to 397 (GLGA…AKQI).

It belongs to the SecY/SEC61-alpha family. Component of the plastid Sec protein translocase complex, which is composed of at least SecY, SecE and SecG.

It localises to the plastid. It is found in the chloroplast thylakoid membrane. The central subunit of the protein translocation channel SecYE. Consists of two halves formed by TMs 1-5 and 6-10. These two domains form a lateral gate at the front which open onto the bilayer between TMs 2 and 7, and are clamped together by SecE at the back. The channel is closed by both a pore ring composed of hydrophobic SecY resides and a short helix (helix 2A) on the extracellular side of the membrane which forms a plug. This chain is Protein translocase subunit SecY, found in Pyropia yezoensis (Susabi-nori).